Reading from the N-terminus, the 449-residue chain is Exodeoxyribonuclease 7 large subunit (449 aa).

It belongs to the XseA family. In terms of assembly, heterooligomer composed of large and small subunits.

Its subcellular location is the cytoplasm. The catalysed reaction is Exonucleolytic cleavage in either 5'- to 3'- or 3'- to 5'-direction to yield nucleoside 5'-phosphates.. Functionally, bidirectionally degrades single-stranded DNA into large acid-insoluble oligonucleotides, which are then degraded further into small acid-soluble oligonucleotides. This is Exodeoxyribonuclease 7 large subunit from Aliivibrio fischeri (strain MJ11) (Vibrio fischeri).